Here is a 323-residue protein sequence, read N- to C-terminus: Ubiquinone biosynthesis protein COQ4, mitochondrial (323 aa).

Residues H209, D210, H213, and E225 each contribute to the Zn(2+) site.

Belongs to the COQ4 family. As to quaternary structure, component of a multi-subunit COQ enzyme complex, composed of at least COQ3, COQ4, COQ5, COQ6, COQ7 and COQ9. It depends on Zn(2+) as a cofactor.

The protein localises to the mitochondrion inner membrane. It catalyses the reaction a 4-hydroxy-3-methoxy-5-(all-trans-polyprenyl)benzoate + H(+) = a 2-methoxy-6-(all-trans-polyprenyl)phenol + CO2. It participates in cofactor biosynthesis; ubiquinone biosynthesis. Functionally, lyase that catalyzes the C1-decarboxylation of 4-hydroxy-3-methoxy-5-(all-trans-polyprenyl)benzoic acid into 2-methoxy-6-(all-trans-polyprenyl)phenol during ubiquinone biosynthesis. This chain is Ubiquinone biosynthesis protein COQ4, mitochondrial, found in Debaryomyces hansenii (strain ATCC 36239 / CBS 767 / BCRC 21394 / JCM 1990 / NBRC 0083 / IGC 2968) (Yeast).